The primary structure comprises 255 residues: Glycerol-3-phosphate regulon repressor (255 aa).

An HTH deoR-type domain is found at 3-58 (QSLRHQKIIKLVEQSGYLSTEELVAALDVSPQTIRRDLNILAELDLIRRHHGGAAS). The H-T-H motif DNA-binding region spans 20-39 (LSTEELVAALDVSPQTIRRD).

Repressor of the glycerol-3-phosphate regulon. The polypeptide is Glycerol-3-phosphate regulon repressor (glpR) (Haemophilus influenzae (strain ATCC 51907 / DSM 11121 / KW20 / Rd)).